The primary structure comprises 833 residues: Phosphatidylinositol-3-phosphatase myotubularin-2 (833 aa).

Residues 42–109 (GSYSNLDCLL…VAIEKFNKLA (68 aa)) form the GRAM domain. The 467-residue stretch at 181 to 647 (TNPKERLLNE…LAPTLWPQFH (467 aa)) folds into the Myotubularin phosphatase domain. Residues 329–332 (NGAK), 354–355 (NI), 440–446 (CSDGWDR), and arginine 486 contribute to the substrate site. Cysteine 440 acts as the Phosphocysteine intermediate in catalysis. The interval 503 to 530 (QSSSARSFPSSPVRQSPGSAAAQSSSSS) is disordered. Residues 504 to 530 (SSSARSFPSSPVRQSPGSAAAQSSSSS) show a composition bias toward low complexity. Residues 660–717 (ETEDQCRAMTVKYSEMKKEKEEAERKVDELSSAMESLNEELLNERDISRAARESAKRA) adopt a coiled-coil conformation. The disordered stretch occupies residues 753 to 772 (KCSHSIPQKQSEDNTTDVSE).

This sequence belongs to the protein-tyrosine phosphatase family. Non-receptor class myotubularin subfamily. Mostly expressed in flowers and roots, and, to a lower extent, in siliques and leaves.

It is found in the cytoplasm. It catalyses the reaction a 1,2-diacyl-sn-glycero-3-phospho-(1D-myo-inositol-3-phosphate) + H2O = a 1,2-diacyl-sn-glycero-3-phospho-(1D-myo-inositol) + phosphate. It carries out the reaction a 1,2-diacyl-sn-glycero-3-phospho-(1D-myo-inositol-3,5-bisphosphate) + H2O = a 1,2-diacyl-sn-glycero-3-phospho-(1D-myo-inositol-5-phosphate) + phosphate. Its function is as follows. Phosphatase with phosphoinositide 3'-phosphatase activity that can use phosphatidylinositol-3-phosphate (PtdIns3P) and phosphatidylinositol-3,5-diphosphate (PtdIns3,5P(2)) as substrates and produces phosphatidylinositol-5-phosphate (PtdIns5P); participates in pathway(s) that transfer gene regulatory signals to the nucleus. The polypeptide is Phosphatidylinositol-3-phosphatase myotubularin-2 (MTM2) (Arabidopsis thaliana (Mouse-ear cress)).